A 145-amino-acid polypeptide reads, in one-letter code: Polytheonamide B (145 aa).

A propeptide spanning residues 1 to 96 is cleaved from the precursor; sequence MADSDNTPTS…DDDLDQAAGG (96 aa). Residue threonine 97 is modified to 2-oxo-5,5-dimethylhexanoate. 3-methylisoleucine is present on isoleucine 99. At valine 101 the chain carries 3-methylvaline. Position 102 is a 3-methyl-D-valine (valine 102). A 3-methylvaline modification is found at valine 103. Alanine 104 is modified (D-alanine (Ala)). Valine 105 is subject to 3-methylvaline. Valine 106 and valine 110 each carry 3-methyl-D-valine. N4-methyl-D-asparagine is present on asparagine 112. 3-hydroxyvaline (Thr) is present on threonine 113. Valine 117 is modified (3-methylvaline). An N4-methyl-D-asparagine modification is found at asparagine 118. Glutamine 119 is modified ((3S)-3-methylglutamine). The residue at position 120 (valine 120) is a 3-hydroxy-D-valine. Position 124 is an N4-methyl-D-asparagine (asparagine 124). Asparagine 126 carries the (3R)-N4-methyl-3-hydroxy-D-asparagine modification. Valine 127 carries the 3-methylvaline modification. Valine 128 bears the 3-hydroxy-D-valine mark. N4-methyl-D-asparagine is present on residues asparagine 130 and asparagine 132. Asparagine 134 carries the post-translational modification (3R)-N4-methyl-3-hydroxy-D-asparagine. N4-methyl-D-asparagine is present on asparagine 136. Serine 138 carries the post-translational modification D-serine (Ser). A D-asparagine modification is found at asparagine 140. Methionine 141 carries the 3,3-dimethylmethionine modification. Asparagine 142 bears the D-asparagine mark. Threonine 144 carries the D-threonine modification.

In terms of processing, epimerization of most, and perhaps all, L- to D-amino acids is catalyzed by PoyD, when PoyA and PoyD are coexpressed in E.coli. N-methylations are catalyzed by PoyE, when PoyA and PoyE are coexpressed in E.coli. Post-translationally, to obtain 2-oxo-5,5-dimethylhexanoate, Thr-97 is firstly dehydrated by PoyF. The second step possibly corresponds to methylation by PoyB/C, and the third step may be a cleavage by PoyH/J.

Antimicrobial peptide active against Gram-positive bacteria (MIC=4-&gt;125 ug/ml). May act by forming transmembrane ion channels, since the peptide rapidly depolarizes the bacterial cytoplasmic membrane, simultaneously decreasing the membrane potential and intracellular potassium contents. The sequence is that of Polytheonamide B from Bacterium symbiont subsp. Theonella swinhoei (strain pTSMAC1).